We begin with the raw amino-acid sequence, 170 residues long: Cyclic pyranopterin monophosphate synthase 1 (170 aa).

Substrate is bound by residues 79–81 and 116–117; these read LCH and ME. The active site involves Asp-131.

The protein belongs to the MoaC family. As to quaternary structure, homohexamer; trimer of dimers.

It catalyses the reaction (8S)-3',8-cyclo-7,8-dihydroguanosine 5'-triphosphate = cyclic pyranopterin phosphate + diphosphate. Its pathway is cofactor biosynthesis; molybdopterin biosynthesis. Its function is as follows. Catalyzes the conversion of (8S)-3',8-cyclo-7,8-dihydroguanosine 5'-triphosphate to cyclic pyranopterin monophosphate (cPMP). The chain is Cyclic pyranopterin monophosphate synthase 1 (moaC1) from Mycobacterium bovis (strain ATCC BAA-935 / AF2122/97).